The chain runs to 90 residues: Small ribosomal subunit protein uS15c (90 aa).

The protein belongs to the universal ribosomal protein uS15 family. Part of the 30S ribosomal subunit.

It is found in the plastid. The protein resides in the chloroplast. This Drimys granadensis protein is Small ribosomal subunit protein uS15c (rps15).